The chain runs to 288 residues: Bifunctional protein FolD (288 aa).

Residues 166 to 168, serine 191, and isoleucine 232 contribute to the NADP(+) site; that span reads GRS.

The protein belongs to the tetrahydrofolate dehydrogenase/cyclohydrolase family. As to quaternary structure, homodimer.

The enzyme catalyses (6R)-5,10-methylene-5,6,7,8-tetrahydrofolate + NADP(+) = (6R)-5,10-methenyltetrahydrofolate + NADPH. It carries out the reaction (6R)-5,10-methenyltetrahydrofolate + H2O = (6R)-10-formyltetrahydrofolate + H(+). Its pathway is one-carbon metabolism; tetrahydrofolate interconversion. Its function is as follows. Catalyzes the oxidation of 5,10-methylenetetrahydrofolate to 5,10-methenyltetrahydrofolate and then the hydrolysis of 5,10-methenyltetrahydrofolate to 10-formyltetrahydrofolate. The protein is Bifunctional protein FolD of Rickettsia peacockii (strain Rustic).